The chain runs to 123 residues: Small ribosomal subunit protein uS12cz/uS12cy (123 aa).

It belongs to the universal ribosomal protein uS12 family. Part of the 30S ribosomal subunit.

It is found in the plastid. It localises to the chloroplast. With S4 and S5 plays an important role in translational accuracy. Located at the interface of the 30S and 50S subunits. This chain is Small ribosomal subunit protein uS12cz/uS12cy (rps12-A), found in Glycine max (Soybean).